We begin with the raw amino-acid sequence, 368 residues long: DNA replication and repair protein RecF (368 aa).

An ATP-binding site is contributed by 30–37; that stretch reads GNNAQGKT.

This sequence belongs to the RecF family.

It is found in the cytoplasm. Functionally, the RecF protein is involved in DNA metabolism; it is required for DNA replication and normal SOS inducibility. RecF binds preferentially to single-stranded, linear DNA. It also seems to bind ATP. The chain is DNA replication and repair protein RecF from Streptococcus pyogenes serotype M18 (strain MGAS8232).